A 222-amino-acid chain; its full sequence is Small ribosomal subunit protein uS7m (222 aa).

A mitochondrion-targeting transit peptide spans 1-14; the sequence is MTTKLARFAQKRWI.

Belongs to the universal ribosomal protein uS7 family. Component of the mitochondrial ribosome small subunit (28S) which comprises a 12S rRNA and about 30 distinct proteins.

The protein localises to the mitochondrion. This is Small ribosomal subunit protein uS7m (mrps-7) from Caenorhabditis elegans.